A 901-amino-acid polypeptide reads, in one-letter code: Modifier of cell death (901 aa).

Disordered stretches follow at residues 147-169 (AQKRGRFPPQARSSLSPQKPRAA) and 218-245 (PRKSAPWQEETAANGGPQSTSLIRSPSP). The segment at 259–282 (FKCAECGDGFPVMDRLCDHMIKQH) adopts a C2H2-type zinc-finger fold. Disordered regions lie at residues 494–528 (KKEHMDYDEPDPNIPSTSAQALGYNPDDDEGDDVP), 682–717 (QERVHQPERRPRRSAAPASPAKPQYRPQPPARSHEE), and 779–901 (HKAI…WDDN). The span at 817-828 (EAAAKLIQAENE) shows a compositional bias: low complexity. Residues 829 to 840 (MVVEEEEVEEPP) show a composition bias toward acidic residues. Basic and acidic residues predominate over residues 846 to 866 (QVPKEKEVEVAEAEKLPEQVK).

Promotes programmed cell death. Its role in programmed cell death may be in conjunction with cell cycle regulatory factor efl-1 and the synthetic multivulva class B proteins dpl-1 and lin-35, and is independent of the ced-1, ced-8 and ced-9 pathways. The sequence is that of Modifier of cell death from Caenorhabditis elegans.